A 281-amino-acid polypeptide reads, in one-letter code: Acetyl-coenzyme A carboxylase carboxyl transferase subunit beta (281 aa).

Positions 24–281 (GLWYKSPKGK…TKLLTMLANN (258 aa)) constitute a CoA carboxyltransferase N-terminal domain.

Belongs to the AccD/PCCB family. In terms of assembly, acetyl-CoA carboxylase is a heterohexamer composed of biotin carboxyl carrier protein (AccB), biotin carboxylase (AccC) and two subunits each of ACCase subunit alpha (AccA) and ACCase subunit beta (AccD).

It localises to the cytoplasm. The catalysed reaction is N(6)-carboxybiotinyl-L-lysyl-[protein] + acetyl-CoA = N(6)-biotinyl-L-lysyl-[protein] + malonyl-CoA. The protein operates within lipid metabolism; malonyl-CoA biosynthesis; malonyl-CoA from acetyl-CoA: step 1/1. Its function is as follows. Component of the acetyl coenzyme A carboxylase (ACC) complex. Biotin carboxylase (BC) catalyzes the carboxylation of biotin on its carrier protein (BCCP) and then the CO(2) group is transferred by the transcarboxylase to acetyl-CoA to form malonyl-CoA. The polypeptide is Acetyl-coenzyme A carboxylase carboxyl transferase subunit beta (Amoebophilus asiaticus (strain 5a2)).